The primary structure comprises 332 residues: L-lactate dehydrogenase A chain (332 aa).

NAD(+) is bound by residues 29 to 57 (GMVG…MEDK) and arginine 99. 3 residues coordinate substrate: arginine 106, asparagine 138, and arginine 169. Asparagine 138 provides a ligand contact to NAD(+). Residue histidine 193 is the Proton acceptor of the active site. Threonine 248 contacts substrate.

This sequence belongs to the LDH/MDH superfamily. LDH family. Homotetramer.

It is found in the cytoplasm. The catalysed reaction is (S)-lactate + NAD(+) = pyruvate + NADH + H(+). It participates in fermentation; pyruvate fermentation to lactate; (S)-lactate from pyruvate: step 1/1. Functionally, interconverts simultaneously and stereospecifically pyruvate and lactate with concomitant interconversion of NADH and NAD(+). This is L-lactate dehydrogenase A chain (ldha) from Fundulus heteroclitus (Killifish).